We begin with the raw amino-acid sequence, 231 residues long: Orotidine 5'-phosphate decarboxylase (231 aa).

Substrate-binding positions include Asp-11, Lys-32, 59-68, Thr-118, Arg-180, Gln-189, Gly-209, and Arg-210; that span reads DLKFHDIPNT. Lys-61 functions as the Proton donor in the catalytic mechanism.

It belongs to the OMP decarboxylase family. Type 1 subfamily. In terms of assembly, homodimer.

It carries out the reaction orotidine 5'-phosphate + H(+) = UMP + CO2. The protein operates within pyrimidine metabolism; UMP biosynthesis via de novo pathway; UMP from orotate: step 2/2. Functionally, catalyzes the decarboxylation of orotidine 5'-monophosphate (OMP) to uridine 5'-monophosphate (UMP). This Synechocystis sp. (strain ATCC 27184 / PCC 6803 / Kazusa) protein is Orotidine 5'-phosphate decarboxylase.